Reading from the N-terminus, the 390-residue chain is 3-ketoacyl-CoA thiolase (390 aa).

C95 serves as the catalytic Acyl-thioester intermediate. Active-site proton acceptor residues include H346 and C376.

The protein belongs to the thiolase-like superfamily. Thiolase family. As to quaternary structure, heterotetramer of two alpha chains (FadB) and two beta chains (FadA).

The protein resides in the cytoplasm. The catalysed reaction is an acyl-CoA + acetyl-CoA = a 3-oxoacyl-CoA + CoA. Its pathway is lipid metabolism; fatty acid beta-oxidation. In terms of biological role, catalyzes the final step of fatty acid oxidation in which acetyl-CoA is released and the CoA ester of a fatty acid two carbons shorter is formed. The chain is 3-ketoacyl-CoA thiolase from Psychrobacter cryohalolentis (strain ATCC BAA-1226 / DSM 17306 / VKM B-2378 / K5).